A 247-amino-acid chain; its full sequence is Adenosylcobinamide-GDP ribazoletransferase (247 aa).

Transmembrane regions (helical) follow at residues 34-54 (IVMFPFIGLILGGVSGLIFIL), 59-79 (CGIPLAALFCILALALLTGGF), 113-133 (GGLALIFVLLAKILVVSELAL), 138-158 (MLAALAAACAAGRGSAVLLMY), 171-193 (VFIGKVSGRQTCITLGLAIIIAT), and 197-219 (PGMQGLAAMVVTCAAIFILGQLL).

The protein belongs to the CobS family. Mg(2+) is required as a cofactor.

It localises to the cell inner membrane. The enzyme catalyses alpha-ribazole + adenosylcob(III)inamide-GDP = adenosylcob(III)alamin + GMP + H(+). It catalyses the reaction alpha-ribazole 5'-phosphate + adenosylcob(III)inamide-GDP = adenosylcob(III)alamin 5'-phosphate + GMP + H(+). It functions in the pathway cofactor biosynthesis; adenosylcobalamin biosynthesis; adenosylcobalamin from cob(II)yrinate a,c-diamide: step 7/7. Joins adenosylcobinamide-GDP and alpha-ribazole to generate adenosylcobalamin (Ado-cobalamin). Also synthesizes adenosylcobalamin 5'-phosphate from adenosylcobinamide-GDP and alpha-ribazole 5'-phosphate. The protein is Adenosylcobinamide-GDP ribazoletransferase of Salmonella newport (strain SL254).